A 721-amino-acid polypeptide reads, in one-letter code: Polyphosphate kinase (721 aa).

Residue asparagine 54 coordinates ATP. Residues arginine 379 and arginine 409 each coordinate Mg(2+). One can recognise a PLD phosphodiesterase domain in the interval 434-468 (THLKTHSKIALVVKRIGGELTSFVHLGTGNYNDKT). Histidine 439 functions as the Phosphohistidine intermediate in the catalytic mechanism. ATP-binding residues include tyrosine 472, arginine 568, and histidine 596.

It belongs to the polyphosphate kinase 1 (PPK1) family. It depends on Mg(2+) as a cofactor. An intermediate of this reaction is the autophosphorylated ppk in which a phosphate is covalently linked to a histidine residue through a N-P bond.

The enzyme catalyses [phosphate](n) + ATP = [phosphate](n+1) + ADP. Functionally, catalyzes the reversible transfer of the terminal phosphate of ATP to form a long-chain polyphosphate (polyP). In Staphylococcus haemolyticus (strain JCSC1435), this protein is Polyphosphate kinase.